Reading from the N-terminus, the 358-residue chain is E3 ubiquitin-protein ligase SIS3 (358 aa).

The first 27 residues, 1–27, serve as a signal peptide directing secretion; it reads MAMRGVDFKWYDGFFLSMLATSVIIVA. 3 helical membrane passes run 40-60, 85-105, and 125-145; these read LHIW…FMFV, VVVL…WTVI, and GFLI…FICV. An RING-type; atypical zinc finger spans residues 235-276; sequence CLICLEEFHIGHEVRGLPCAHNFHVECIDQWLRLNVKCPRCR. Positions 336–358 are disordered; the sequence is TALETAENGGVPPVLTDLSPSRR.

In terms of tissue distribution, expressed in roots, stems, leaves, flowers and siliques.

The protein localises to the membrane. It catalyses the reaction S-ubiquitinyl-[E2 ubiquitin-conjugating enzyme]-L-cysteine + [acceptor protein]-L-lysine = [E2 ubiquitin-conjugating enzyme]-L-cysteine + N(6)-ubiquitinyl-[acceptor protein]-L-lysine.. It functions in the pathway protein modification; protein ubiquitination. E3 ubiquitin protein ligase that acts as a positive regulator of sugar signaling during early seedling development. Possesses E3 ligase activity in vitro. In Arabidopsis thaliana (Mouse-ear cress), this protein is E3 ubiquitin-protein ligase SIS3 (SIS3).